We begin with the raw amino-acid sequence, 393 residues long: Major outer membrane porin, serovar E (393 aa).

Positions 1 to 22 are cleaved as a signal peptide; it reads MKKLLKSVLVFAALSSASSLQA.

Belongs to the chlamydial porin (CP) (TC 1.B.2) family. Part of a disulfide cross-linked outer membrane complex (COMC) composed of the major outer membrane porin (MOMP), the small cysteine-rich protein (OmcA) and the large cysteine-rich periplasmic protein (OmcB).

The protein localises to the cell outer membrane. In elementary bodies (EBs, the infectious stage, which is able to survive outside the host cell) provides the structural integrity of the outer envelope through disulfide cross-links with the small cysteine-rich protein and the large cysteine-rich periplasmic protein. It has been described in publications as the Sarkosyl-insoluble COMC (Chlamydia outer membrane complex), and serves as the functional equivalent of peptidoglycan. Its function is as follows. Permits diffusion of specific solutes through the outer membrane. The chain is Major outer membrane porin, serovar E (ompA) from Chlamydia trachomatis.